A 59-amino-acid chain; its full sequence is Mitochondrial sheath formation-associated protein (59 aa).

Over Met-1 to Trp-6 the chain is Mitochondrial intermembrane. 2 helical membrane-spanning segments follow: residues Ile-2–Leu-22 and Met-7–Met-23. The Cytoplasmic segment spans residues Pro-24–Thr-40.

As to quaternary structure, interacts with VDAC3.

The protein resides in the mitochondrion outer membrane. In terms of biological role, regulates sperm development. May be involved in mitochondrial sheath formation. This chain is Mitochondrial sheath formation-associated protein, found in Homo sapiens (Human).